Reading from the N-terminus, the 268-residue chain is uncharacterized protein (268 aa).

Residues 15–77 enclose the HTH iclR-type domain; that stretch reads NQALIRGLRL…NAAGSYRLTI (63 aa). Residues 37–56 constitute a DNA-binding region (H-T-H motif); it reads LAKLAELANLNKSTAHRLLQ. Positions 92-265 constitute an IclR-ED domain; sequence IIHVASPYLE…AEQISLELGY (174 aa).

This is an uncharacterized protein from Haemophilus influenzae (strain ATCC 51907 / DSM 11121 / KW20 / Rd).